We begin with the raw amino-acid sequence, 956 residues long: MSDIRKWFMKAHEKGNGSAPKSTSSKAGPVKNAAETAPIKSEQASEDLETADRRKTSKYFGKDKTKVKDEKEVEAIPAKRKLKTESDDLVKPRPRKVTKVVDDDDDDFDVPISRKTRDTTPSKKLKSGSGRGIASKTVDNDDDDDGEDKETPLKSAGRGRGGRAAPGASTGGRGRGGGRGGFMNFGERKDPPHKGEKEVPEGTPDCLAGLTFVISGTLDSLEREEAEDLIKRHGGRITGSVSKKTTYLLCDEDIGGRKSEKAKELGTKFLTEDGLFDIIRSSKPVKKSLPERSNKGTEKICAPPKTSPQKEETRGKPLAKSSPKKVPPAKGKNKIIETSLPWTEKYRPKVPNEIVGNQSLVTQLHNWLSHWHDQFGGTGSKGKGKKLNDAGSKKAVLLSGTPGIGKTTSAKLVSQMLGFQAVEVNASDSRGKANSNIAKGIGGSNANSVKELVNNEAMAANFDRSKHPKTVLIMDEVDGMSAGDRGGVADLIASIKISKIPIICICNDRYSQKLKSLVNYCLPLNYRKPTKQQMAKRLMHIAKAEGLEINEIALEELAERVNGDIRLAVNQLQYMSLSMSVIKYDDIRQRLLSSAKDEDISPFTAVDKLFGYNGGKLRMDERIDLSMSDPDLVPLLIQENYLNYRPSGKDEAKRMDLLARAAESIADGDIINVQIRRYRQWQLSQSCCVASSILPASLLHGSREVLEQGERNFNRFGGWLGKNSTAGKNRRLMEDLHVHVLASRESSAGRETLRVDYLPLLLSRLTSPLQTLPKDEAVSEVVDFMNSYSISQEDFDTILELGKFKGRENPMEGVPPPVKAALTKKYNEMNKTRMVRVADMVQLPGVKKAPKKRIAAMLEPTVDSLRDEDGEPLADNEEGNGSDAEEDSEEATDGEKLESNLKNLNARGIQVELDLKGAGSSGSRKAAGKGRGRGKAADTSAEKKATGRGSGAKRKR.

Composition is skewed to basic and acidic residues over residues 1-15 (MSDI…HEKG) and 50-74 (TADR…KEVE). Disordered regions lie at residues 1 to 206 (MSDI…TPDC) and 286 to 332 (KKSL…AKGK). The span at 158–183 (RGRGGRAAPGASTGGRGRGGGRGGFM) shows a compositional bias: gly residues. 2 stretches are compositionally biased toward basic and acidic residues: residues 186 to 200 (GERK…KEVP) and 288 to 298 (SLPERSNKGTE). The BRCT domain maps to 202 to 292 (GTPDCLAGLT…KPVKKSLPER (91 aa)). 399–406 (SGTPGIGK) provides a ligand contact to ATP. Residues 858-956 (LEPTVDSLRD…GRGSGAKRKR (99 aa)) are disordered. Residues 866–892 (RDEDGEPLADNEEGNGSDAEEDSEEAT) show a composition bias toward acidic residues. Positions 916-925 (KGAGSSGSRK) are enriched in low complexity.

It belongs to the activator 1 large subunit family. Heterotetramer of subunits RFC2, RFC3, RFC4 and RFC5 that can form a complex with RFC1. In terms of tissue distribution, expressed at high levels in flowers and siliques, and at lower levels in roots, stems and leaves.

It localises to the nucleus. Its function is as follows. Plays a role as mediator of transcriptional gene silencing (TGS), DNA replication, DNA repair, hypersensitive response (HR) and telomere length regulation. Is required in meiosis for DNA double-strand break (DSB) repair during meiotic homologous recombination. May participate in the RAD51-mediated recombination intermediate repair process. Is important for lagging strand synthesis. Promotes meiotic recombination via a specific pathway for crossovers (COs) that involves the formation of double Holliday Junction (dHJ) intermediates. This chain is Replication factor C subunit 1 (RFC1), found in Arabidopsis thaliana (Mouse-ear cress).